We begin with the raw amino-acid sequence, 132 residues long: Small ribosomal subunit protein uS8 (132 aa).

The protein belongs to the universal ribosomal protein uS8 family. In terms of assembly, part of the 30S ribosomal subunit. Contacts proteins S5 and S12.

In terms of biological role, one of the primary rRNA binding proteins, it binds directly to 16S rRNA central domain where it helps coordinate assembly of the platform of the 30S subunit. This is Small ribosomal subunit protein uS8 from Paenarthrobacter aurescens (strain TC1).